Reading from the N-terminus, the 312-residue chain is Ribosomal RNA small subunit methyltransferase H (312 aa).

S-adenosyl-L-methionine is bound by residues 37-39 (GGH), D57, F83, and D104.

Belongs to the methyltransferase superfamily. RsmH family.

Its subcellular location is the cytoplasm. The catalysed reaction is cytidine(1402) in 16S rRNA + S-adenosyl-L-methionine = N(4)-methylcytidine(1402) in 16S rRNA + S-adenosyl-L-homocysteine + H(+). In terms of biological role, specifically methylates the N4 position of cytidine in position 1402 (C1402) of 16S rRNA. This chain is Ribosomal RNA small subunit methyltransferase H, found in Malacoplasma penetrans (strain HF-2) (Mycoplasma penetrans).